We begin with the raw amino-acid sequence, 123 residues long: Small ribosomal subunit protein uS13 (123 aa).

Residues 97 to 123 (PVRGQRTHTNAKTRKGRSKLPVAAKKK) form a disordered region.

It belongs to the universal ribosomal protein uS13 family. As to quaternary structure, part of the 30S ribosomal subunit. Forms a loose heterodimer with protein S19. Forms two bridges to the 50S subunit in the 70S ribosome.

Its function is as follows. Located at the top of the head of the 30S subunit, it contacts several helices of the 16S rRNA. In the 70S ribosome it contacts the 23S rRNA (bridge B1a) and protein L5 of the 50S subunit (bridge B1b), connecting the 2 subunits; these bridges are implicated in subunit movement. Contacts the tRNAs in the A and P-sites. In Ehrlichia chaffeensis (strain ATCC CRL-10679 / Arkansas), this protein is Small ribosomal subunit protein uS13.